The following is a 127-amino-acid chain: Ribonuclease P protein component (127 aa).

This sequence belongs to the RnpA family. In terms of assembly, consists of a catalytic RNA component (M1 or rnpB) and a protein subunit.

It catalyses the reaction Endonucleolytic cleavage of RNA, removing 5'-extranucleotides from tRNA precursor.. RNaseP catalyzes the removal of the 5'-leader sequence from pre-tRNA to produce the mature 5'-terminus. It can also cleave other RNA substrates such as 4.5S RNA. The protein component plays an auxiliary but essential role in vivo by binding to the 5'-leader sequence and broadening the substrate specificity of the ribozyme. This chain is Ribonuclease P protein component, found in Agrobacterium fabrum (strain C58 / ATCC 33970) (Agrobacterium tumefaciens (strain C58)).